A 112-amino-acid polypeptide reads, in one-letter code: Divalent-cation tolerance protein CutA (112 aa).

The Cu cation site is built by cysteine 16, histidine 83, and histidine 84.

This sequence belongs to the CutA family. As to quaternary structure, homotrimer. Cu cation is required as a cofactor.

The protein resides in the cytoplasm. Its function is as follows. Involved in resistance toward heavy metals. In Shigella flexneri, this protein is Divalent-cation tolerance protein CutA.